Reading from the N-terminus, the 147-residue chain is Mannitol-specific cryptic phosphotransferase enzyme IIA component (147 aa).

The PTS EIIA type-2 domain occupies 5 to 147 (DYFPESSISV…KQLADIISRG (143 aa)). The active-site Tele-phosphohistidine intermediate is the H67. At H67 the chain carries Phosphohistidine; by HPr.

It localises to the cytoplasm. Its function is as follows. The phosphoenolpyruvate-dependent sugar phosphotransferase system (sugar PTS), a major carbohydrate active transport system, catalyzes the phosphorylation of incoming sugar substrates concomitantly with their translocation across the cell membrane. The enzyme II CmtAB PTS system is involved in D-mannitol transport. This chain is Mannitol-specific cryptic phosphotransferase enzyme IIA component (cmtB), found in Escherichia coli O157:H7.